The primary structure comprises 119 residues: Ig heavy chain V region X44 (119 aa).

One can recognise an Ig-like domain in the interval 1 to 117 (EVKLLESGGG…WGQGTLVTVS (117 aa)).

This chain is Ig heavy chain V region X44, found in Mus musculus (Mouse).